Reading from the N-terminus, the 185-residue chain is Ribosome-recycling factor (185 aa).

It belongs to the RRF family.

It localises to the cytoplasm. Functionally, responsible for the release of ribosomes from messenger RNA at the termination of protein biosynthesis. May increase the efficiency of translation by recycling ribosomes from one round of translation to another. In Nitrosomonas eutropha (strain DSM 101675 / C91 / Nm57), this protein is Ribosome-recycling factor.